A 414-amino-acid polypeptide reads, in one-letter code: Serine/threonine transporter SstT (414 aa).

Over 2–15 (TTQRSPGLFRRLAH) the chain is Cytoplasmic. Residues 16 to 36 (GSLVKQILVGLVLGILLAWIS) form a helical membrane-spanning segment. Residues 37–45 (KPAAEAVGL) are Periplasmic-facing. The helical transmembrane segment at 46 to 66 (LGTLFVGALKAVAPILVLMLV) threads the bilayer. Residues 67-83 (MASIANHQHGQKTNIRP) are Cytoplasmic-facing. Residues 84–104 (ILFLYLLGTFSAALAAVVFSF) form a helical membrane-spanning segment. Over 105–142 (AFPSTLHLSSSAGDISPPSGIVEVMRGLVMSMVSNPID) the chain is Periplasmic. Residues 143–163 (ALLKGNYIGILVWAIGLGFAL) traverse the membrane as a helical segment. Over 164-179 (RHGNETTKNLVNDMSN) the chain is Cytoplasmic. The helical transmembrane segment at 180 to 200 (AVTFMVKLVIRFAPIGIFGLV) threads the bilayer. The Periplasmic segment spans residues 201 to 217 (SSTLATTGFSTLWGYAQ). Residues 218-238 (LLVVLVGCMLLVALVVNPLLV) form a helical membrane-spanning segment. Residues 239–299 (WWKIRRNPFP…VSIPLGATIN (61 aa)) lie on the Cytoplasmic side of the membrane. Residues 300–320 (MAGAAITITVLTLAAVNTLGI) traverse the membrane as a helical segment. The Periplasmic segment spans residues 321-331 (PVDLPTALLLS). Residues 332-352 (VVASLCACGASGVAGGSLLLI) traverse the membrane as a helical segment. The Cytoplasmic portion of the chain corresponds to 353–414 (PLACNMFGIS…DRLANSALRN (62 aa)).

This sequence belongs to the dicarboxylate/amino acid:cation symporter (DAACS) (TC 2.A.23) family.

The protein resides in the cell inner membrane. It carries out the reaction L-serine(in) + Na(+)(in) = L-serine(out) + Na(+)(out). It catalyses the reaction L-threonine(in) + Na(+)(in) = L-threonine(out) + Na(+)(out). Functionally, involved in the import of serine and threonine into the cell, with the concomitant import of sodium (symport system). This chain is Serine/threonine transporter SstT, found in Shigella flexneri serotype 5b (strain 8401).